Consider the following 274-residue polypeptide: 2,3,4,5-tetrahydropyridine-2,6-dicarboxylate N-succinyltransferase (274 aa).

Arg106 and Asp143 together coordinate substrate.

Belongs to the transferase hexapeptide repeat family. As to quaternary structure, homotrimer.

It is found in the cytoplasm. It catalyses the reaction (S)-2,3,4,5-tetrahydrodipicolinate + succinyl-CoA + H2O = (S)-2-succinylamino-6-oxoheptanedioate + CoA. Its pathway is amino-acid biosynthesis; L-lysine biosynthesis via DAP pathway; LL-2,6-diaminopimelate from (S)-tetrahydrodipicolinate (succinylase route): step 1/3. The protein is 2,3,4,5-tetrahydropyridine-2,6-dicarboxylate N-succinyltransferase of Paracidovorax citrulli (strain AAC00-1) (Acidovorax citrulli).